The chain runs to 238 residues: Zwei Ig domain protein zig-2 (238 aa).

Positions 1–17 are cleaved as a signal peptide; it reads MLKFTAISFVLLNAAES. Residues 31-130 form the Ig-like C2-type 1 domain; that stretch reads PLLKFTRTPN…NGLTKLEHVA (100 aa). N-linked (GlcNAc...) asparagine glycosylation is found at N40 and N43. Residues C54 and C117 are joined by a disulfide bond. N137, N206, and N216 each carry an N-linked (GlcNAc...) asparagine glycan. Residues 149–230 form the Ig-like C2-type 2 domain; sequence PFISMTVDFR…NHFGETTAIT (82 aa). C170 and C217 are oxidised to a cystine.

In terms of tissue distribution, expressed in PVT neurons and weakly in some head neurons.

Its subcellular location is the secreted. Probably not involved in maintaining the position of ASI and ASH head neuron cell bodies and ventral nerve cord axons of PVQ, PVP, RMEV, AVK and HSN neurons. The chain is Zwei Ig domain protein zig-2 from Caenorhabditis elegans.